The primary structure comprises 309 residues: Heme A synthase (309 aa).

Over 1-6 the chain is Cytoplasmic; the sequence is MTKKLK. Residues 7-27 traverse the membrane as a helical segment; sequence ILSVISTICMIPLLLGGALVT. The Extracellular segment spans residues 28 to 62; sequence KTGSADGCGNSWPLCEGQFLPTKISFEMFIELSHR. A disulfide bond links C35 and C42. The active site involves E58. H61 provides a ligand contact to heme o. A helical membrane pass occupies residues 63–83; it reads GVTGVVGILIVYLTYLVWKEL. At 84 to 88 the chain is on the cytoplasmic side; that stretch reads RHNKE. The helical transmembrane segment at 89–109 threads the bilayer; that stretch reads VVFLAFSALSLMILQALIGAA. Over 110–123 the chain is Extracellular; sequence AVVWGQSDFALATH. Position 123 (H123) interacts with heme o. Residues 124 to 144 traverse the membrane as a helical segment; the sequence is FGISLVCFAAVFLLMLQLFEI. Topologically, residues 145–159 are cytoplasmic; it reads DKKLHTEDIHINKTH. The chain crosses the membrane as a helical span at residues 160–180; the sequence is RIEIYAISFYTMCVVYSGALV. At 181–211 the chain is on the extracellular side; the sequence is RHTDSNLACRDWPLCVNNSSFGISDYNFYQW. C189 and C195 form a disulfide bridge. A helical transmembrane segment spans residues 212-232; it reads VQMGHRLAAGILFIWTVILTI. H216 contacts heme b. Residues 233–247 are Cytoplasmic-facing; that stretch reads RMVKHYKNSKVFYWS. A helical transmembrane segment spans residues 248-268; that stretch reads WLITLGLITLQVLFGALIIFT. Residues 269 to 271 lie on the Extracellular side of the membrane; that stretch reads SLN. The helical transmembrane segment at 272–292 threads the bilayer; it reads LAIALFHALFITCYFGMLSFF. H278 provides a ligand contact to heme b. Over 293 to 309 the chain is Cytoplasmic; sequence MHLSFRAKRREKYSNQS.

Belongs to the COX15/CtaA family. Type 1 subfamily. Interacts with CtaB. Heme b is required as a cofactor.

It localises to the cell membrane. The enzyme catalyses Fe(II)-heme o + 2 A + H2O = Fe(II)-heme a + 2 AH2. The protein operates within porphyrin-containing compound metabolism; heme A biosynthesis; heme A from heme O: step 1/1. Functionally, catalyzes the conversion of heme O to heme A by two successive hydroxylations of the methyl group at C8. The first hydroxylation forms heme I, the second hydroxylation results in an unstable dihydroxymethyl group, which spontaneously dehydrates, resulting in the formyl group of heme A. This Oceanobacillus iheyensis (strain DSM 14371 / CIP 107618 / JCM 11309 / KCTC 3954 / HTE831) protein is Heme A synthase.